The primary structure comprises 389 residues: Dihydroorotase (389 aa).

Zn(2+) contacts are provided by H51 and H53. Residues H53 to R55 and N85 each bind substrate. Zn(2+)-binding residues include K133, H158, H193, and D256. At K133 the chain carries N6-carboxylysine. The active site involves D256. Substrate contacts are provided by residues H260 and P274–G275.

The protein belongs to the metallo-dependent hydrolases superfamily. DHOase family. Class I DHOase subfamily. Zn(2+) is required as a cofactor.

It catalyses the reaction (S)-dihydroorotate + H2O = N-carbamoyl-L-aspartate + H(+). It functions in the pathway pyrimidine metabolism; UMP biosynthesis via de novo pathway; (S)-dihydroorotate from bicarbonate: step 3/3. Functionally, catalyzes the reversible cyclization of carbamoyl aspartate to dihydroorotate. This Sulfolobus acidocaldarius (strain ATCC 33909 / DSM 639 / JCM 8929 / NBRC 15157 / NCIMB 11770) protein is Dihydroorotase.